Reading from the N-terminus, the 162-residue chain is Phosphopantetheine adenylyltransferase (162 aa).

Residue S9 participates in substrate binding. Residues 9–10 (SF) and H17 each bind ATP. The substrate site is built by K41, L73, and K87. ATP contacts are provided by residues 88-90 (GLR), E98, and 123-129 (YAHLSSS).

The protein belongs to the bacterial CoaD family. In terms of assembly, homohexamer. Mg(2+) serves as cofactor.

It is found in the cytoplasm. It carries out the reaction (R)-4'-phosphopantetheine + ATP + H(+) = 3'-dephospho-CoA + diphosphate. It functions in the pathway cofactor biosynthesis; coenzyme A biosynthesis; CoA from (R)-pantothenate: step 4/5. In terms of biological role, reversibly transfers an adenylyl group from ATP to 4'-phosphopantetheine, yielding dephospho-CoA (dPCoA) and pyrophosphate. The chain is Phosphopantetheine adenylyltransferase from Symbiobacterium thermophilum (strain DSM 24528 / JCM 14929 / IAM 14863 / T).